The sequence spans 210 residues: Glutathione S-transferase P (210 aa).

Positions 2 to 81 constitute a GST N-terminal domain; that stretch reads PPYTIVYFPV…HLGRSLGLYG (80 aa). A Phosphotyrosine; by EGFR modification is found at Tyr-4. Glutathione-binding positions include Tyr-8, Arg-14, Trp-39, Lys-45, and 52 to 53; that span reads QL. A Phosphothreonine modification is found at Thr-62. 65 to 66 serves as a coordination point for glutathione; it reads QS. The 122-residue stretch at 83–204 folds into the GST C-terminal domain; the sequence is DQREAALVDM…SSPDHVNRPI (122 aa). N6-succinyllysine is present on residues Lys-103 and Lys-116. Lys-128 is subject to N6-acetyllysine.

The protein belongs to the GST superfamily. Pi family. In terms of assembly, homodimer. Interacts with CDK5.

Its subcellular location is the cytoplasm. It is found in the mitochondrion. The protein resides in the nucleus. It carries out the reaction RX + glutathione = an S-substituted glutathione + a halide anion + H(+). It catalyses the reaction prostaglandin J2 + glutathione = prostaglandin J2-S-(R)-glutathione. The catalysed reaction is prostaglandin J2 + glutathione = prostaglandin J2-S-(S)-glutathione. The enzyme catalyses prostaglandin A2 + glutathione = prostaglandin A2-S-(S)-glutathione. It carries out the reaction 11(S)-hydroxy-14(S),15(S)-epoxy-(5Z,8Z,12E)-eicosatrienoate + glutathione = (11S,15S)-dihydroxy-14(R)-S-glutathionyl-(5Z,8Z,12E)-eicosatrienoate. In terms of biological role, conjugation of reduced glutathione to a wide number of exogenous and endogenous hydrophobic electrophiles. Involved in the formation of glutathione conjugates of both prostaglandin A2 (PGA2) and prostaglandin J2 (PGJ2). Participates in the formation of novel hepoxilin regioisomers. Negatively regulates CDK5 activity via p25/p35 translocation to prevent neurodegeneration. In Cricetulus longicaudatus (Long-tailed dwarf hamster), this protein is Glutathione S-transferase P (GSTP1).